The primary structure comprises 62 residues: Sperm protamine P1 (62 aa).

The interval 1–62 (MARYRRRSRS…RYSRRGRRRY (62 aa)) is disordered.

This sequence belongs to the protamine P1 family. Testis.

It is found in the nucleus. The protein localises to the chromosome. Protamines substitute for histones in the chromatin of sperm during the haploid phase of spermatogenesis. They compact sperm DNA into a highly condensed, stable and inactive complex. The protein is Sperm protamine P1 (PRM1) of Sarcophilus harrisii (Tasmanian devil).